The sequence spans 578 residues: Proteasome-associated ATPase (578 aa).

Positions 8–84 (TAAELRNQVR…LKEEVDRLAQ (77 aa)) form a coiled coil. 267–272 (GCGKTL) is an ATP binding site. Positions 577 to 578 (YL) are docks into pockets in the proteasome alpha-ring.

It belongs to the AAA ATPase family. Homohexamer. Assembles into a hexameric ring structure that caps the 20S proteasome core. Strongly interacts with the prokaryotic ubiquitin-like protein Pup through a hydrophobic interface; the interacting region of ARC lies in its N-terminal coiled-coil domain. There is one Pup binding site per ARC hexamer ring. Upon ATP-binding, the C-terminus of ARC interacts with the alpha-rings of the proteasome core, possibly by binding to the intersubunit pockets.

It functions in the pathway protein degradation; proteasomal Pup-dependent pathway. In terms of biological role, ATPase which is responsible for recognizing, binding, unfolding and translocation of pupylated proteins into the bacterial 20S proteasome core particle. May be essential for opening the gate of the 20S proteasome via an interaction with its C-terminus, thereby allowing substrate entry and access to the site of proteolysis. Thus, the C-termini of the proteasomal ATPase may function like a 'key in a lock' to induce gate opening and therefore regulate proteolysis. In Kribbella flavida (strain DSM 17836 / JCM 10339 / NBRC 14399), this protein is Proteasome-associated ATPase.